Consider the following 363-residue polypeptide: uncharacterized protein (363 aa).

Helical transmembrane passes span 20-40 (WFFT…NTNI), 63-83 (INFA…FLVM), 101-121 (FPLI…GVQS), 141-161 (SVWQ…FTAF), 186-206 (FSLL…IMLA), 227-247 (IFKY…CVVL), and 268-288 (FLIV…WYVL). Residues 329 to 363 (PRADLTPNDTLHMESKKKPLSQSPRVVIEEEDVAE) form a disordered region.

It localises to the membrane. This is an uncharacterized protein from Caenorhabditis elegans.